Here is a 412-residue protein sequence, read N- to C-terminus: uncharacterized protein (412 aa).

Residues F20–G199 enclose the UmuC domain.

It belongs to the DNA polymerase type-Y family.

This is an uncharacterized protein from Mycoplasma pneumoniae (strain ATCC 29342 / M129 / Subtype 1) (Mycoplasmoides pneumoniae).